Here is a 256-residue protein sequence, read N- to C-terminus: Probable S-methyl-5'-thioinosine phosphorylase (256 aa).

Residues T10 and R47–H48 contribute to the phosphate site. M178 provides a ligand contact to substrate. T179 contacts phosphate. N202–A204 contacts substrate.

It belongs to the PNP/MTAP phosphorylase family. MTAP subfamily. Homotrimer.

It catalyses the reaction S-methyl-5'-thioinosine + phosphate = 5-(methylsulfanyl)-alpha-D-ribose 1-phosphate + hypoxanthine. It participates in purine metabolism; purine nucleoside salvage. Catalyzes the reversible phosphorylation of S-methyl-5'-thioinosine (MTI) to hypoxanthine and 5-methylthioribose-1-phosphate. Involved in the breakdown of S-methyl-5'-thioadenosine (MTA), a major by-product of polyamine biosynthesis. Catabolism of (MTA) occurs via deamination to MTI and phosphorolysis to hypoxanthine. The polypeptide is Probable S-methyl-5'-thioinosine phosphorylase (Methanopyrus kandleri (strain AV19 / DSM 6324 / JCM 9639 / NBRC 100938)).